The chain runs to 527 residues: D-3-phosphoglycerate dehydrogenase (527 aa).

Residues 149-150, Asp-169, 228-230, and Asp-254 contribute to the NAD(+) site; these read RV and AAR. Residue Arg-230 is part of the active site. Glu-259 is a catalytic residue. Catalysis depends on His-278, which acts as the Proton donor. Residue 278-281 participates in NAD(+) binding; sequence HIAA. The ACT domain occupies 453–527; it reads YIISLHEDKP…GIIDATYVEL (75 aa).

It belongs to the D-isomer specific 2-hydroxyacid dehydrogenase family.

It catalyses the reaction (2R)-3-phosphoglycerate + NAD(+) = 3-phosphooxypyruvate + NADH + H(+). It participates in amino-acid biosynthesis; L-serine biosynthesis; L-serine from 3-phospho-D-glycerate: step 1/3. This is D-3-phosphoglycerate dehydrogenase (serA) from Archaeoglobus fulgidus (strain ATCC 49558 / DSM 4304 / JCM 9628 / NBRC 100126 / VC-16).